A 51-amino-acid polypeptide reads, in one-letter code: DNA-directed RNA polymerases II, IV and V subunit 12 (51 aa).

Residues Cys12, Cys15, Cys29, and Cys32 each contribute to the Zn(2+) site.

The protein belongs to the archaeal Rpo12/eukaryotic RPC10 RNA polymerase subunit family. As to quaternary structure, component of the RNA polymerase II, IV and V complexes. Associates with the mediator complex. Interacts with NRPD1.

It localises to the nucleus. Functionally, DNA-dependent RNA polymerase catalyzes the transcription of DNA into RNA using the four ribonucleoside triphosphates as substrates. Component of RNA polymerase II which synthesizes mRNA precursors and many functional non-coding RNAs. Pol II is the central component of the basal RNA polymerase II transcription machinery. It is composed of mobile elements that move relative to each other. Component of RNA polymerases IV and V which mediate short-interfering RNAs (siRNA) accumulation and subsequent RNA-directed DNA methylation-dependent (RdDM) transcriptional gene silencing (TGS) of endogenous repeated sequences, including transposable elements. In Arabidopsis thaliana (Mouse-ear cress), this protein is DNA-directed RNA polymerases II, IV and V subunit 12 (NRPB12).